The sequence spans 742 residues: 2'-5'-oligoadenylate synthase 2 (742 aa).

Residues 1 to 35 form a disordered region; sequence MGNWLTGNWSSDRSSGYSSGWSPGGSSGVPSGPVH. Gly2 is lipidated: N-myristoyl glycine. A compositionally biased stretch (low complexity) spans 10-21; sequence SSDRSSGYSSGW. OAS domain stretches follow at residues 60–374 and 382–721; these read VPSQ…YWDV and TPSH…WKVP. Lys417 carries the N6-acetyllysine modification. ATP is bound at residue Ser436. Mg(2+)-binding residues include Asp448, Asp450, and Asp519. 2 residues coordinate ATP: Arg582 and Lys585.

The protein belongs to the 2-5A synthase family. In terms of assembly, homodimer. Mg(2+) is required as a cofactor. In terms of processing, myristoylation is not essential for its activity. Glycosylated. Glycosylation is essential for its activity. Expressed in the uterus. Expressed in mammary glands: expressed at low level before the establishment of lactation, then expression strongly increases, and subsequently decreases during early involution.

The protein localises to the cytoplasm. It localises to the perinuclear region. The enzyme catalyses 3 ATP = 5'-triphosphoadenylyl-(2'-&gt;5')-adenylyl-(2'-&gt;5')-adenosine + 2 diphosphate. With respect to regulation, produced as a latent enzyme which is activated by double stranded RNA (dsRNA) generated during the course of viral infection. The dsRNA activator must be at least 15 nucleotides long, and no modification of the 2'-hydroxyl group is tolerated. ssRNA or dsDNA do not act as activators. Strongly inhibited by copper, iron and zinc ions. Partially inhibited by cobalt and nickel ions. Interferon-induced, dsRNA-activated antiviral enzyme which plays a critical role in cellular innate antiviral response. Activated by detection of double stranded RNA (dsRNA): polymerizes higher oligomers of 2'-5'-oligoadenylates (2-5A) from ATP which then bind to the inactive monomeric form of ribonuclease L (RNASEL) leading to its dimerization and subsequent activation. Activation of RNASEL leads to degradation of cellular as well as viral RNA, resulting in the inhibition of protein synthesis, thus terminating viral replication. Can mediate the antiviral effect via the classical RNASEL-dependent pathway or an alternative antiviral pathway independent of RNASEL. In addition, it may also play a role in other cellular processes such as apoptosis, cell growth, differentiation and gene regulation. May act as a negative regulator of lactation, stopping lactation in virally infected mammary gland lobules, thereby preventing transmission of viruses to neonates. Non-infected lobules would not be affected, allowing efficient pup feeding during infection. This Mus musculus (Mouse) protein is 2'-5'-oligoadenylate synthase 2.